Consider the following 298-residue polypeptide: ATP synthase gamma chain (298 aa).

It belongs to the ATPase gamma chain family. As to quaternary structure, F-type ATPases have 2 components, CF(1) - the catalytic core - and CF(0) - the membrane proton channel. CF(1) has five subunits: alpha(3), beta(3), gamma(1), delta(1), epsilon(1). CF(0) has three main subunits: a, b and c.

The protein localises to the cell inner membrane. Produces ATP from ADP in the presence of a proton gradient across the membrane. The gamma chain is believed to be important in regulating ATPase activity and the flow of protons through the CF(0) complex. The chain is ATP synthase gamma chain from Desulfosudis oleivorans (strain DSM 6200 / JCM 39069 / Hxd3) (Desulfococcus oleovorans).